Reading from the N-terminus, the 968-residue chain is Probable histidine kinase 1 (968 aa).

Coiled-coil stretches lie at residues Leu89 to Glu120 and Lys169 to Thr204. The 284-residue stretch at Thr372–Ile655 folds into the Histidine kinase domain. A Phosphohistidine; by autocatalysis modification is found at His375. Residues Ser737–Lys757 form a disordered region. Positions Thr738 to Arg754 are enriched in polar residues. A Response regulatory domain is found at Lys818–Leu965. Asp867 carries the 4-aspartylphosphate modification.

Post-translationally, activation probably requires a transfer of a phosphate group between a His in the transmitter domain and an Asp of the receiver domain.

The catalysed reaction is ATP + protein L-histidine = ADP + protein N-phospho-L-histidine.. Its function is as follows. Cytokinin receptor related to bacterial two-component regulators. Functions as a histidine kinase and transmits the stress signal to a downstream MAPK cascade. The chain is Probable histidine kinase 1 from Oryza sativa subsp. indica (Rice).